The chain runs to 153 residues: Putative riboflavin kinase (153 aa).

Mg(2+)-binding residues include threonine 28 and asparagine 30. Catalysis depends on glutamate 80, which acts as the Nucleophile.

Monomer. It depends on Zn(2+) as a cofactor. Mg(2+) serves as cofactor.

It is found in the cytoplasm. The enzyme catalyses riboflavin + ATP = FMN + ADP + H(+). The protein operates within cofactor biosynthesis; FMN biosynthesis; FMN from riboflavin (ATP route): step 1/1. In terms of biological role, catalyzes the phosphorylation of riboflavin (vitamin B2) to form flavin-mononucleotide (FMN). In Drosophila melanogaster (Fruit fly), this protein is Putative riboflavin kinase.